The following is a 158-amino-acid chain: Fucolectin (158 aa).

An F5/8 type C-like region spans residues K16–V148. Residues N35, D38, N40, and S49 each coordinate Ca(2+). 3 disulfides stabilise this stretch: C50–C146, C82–C83, and C108–C124. Alpha-L-fucose-binding residues include H52 and R79. The Cell attachment site signature appears at R79 to D81. R86 provides a ligand contact to alpha-L-fucose. Positions 146 and 147 each coordinate Ca(2+).

Belongs to the fucolectin family. Homotrimer.

It localises to the secreted. Its function is as follows. Acts as a defensive agent. Recognizes blood group fucosylated oligosaccharides including A, B, H and Lewis B-type antigens. Does not recognize Lewis A antigen and has low affinity for monovalent haptens. The chain is Fucolectin from Anguilla anguilla (European freshwater eel).